We begin with the raw amino-acid sequence, 262 residues long: Acyl-[acyl-carrier-protein]--UDP-N-acetylglucosamine O-acyltransferase (262 aa).

It belongs to the transferase hexapeptide repeat family. LpxA subfamily. Homotrimer.

It localises to the cytoplasm. The catalysed reaction is a (3R)-hydroxyacyl-[ACP] + UDP-N-acetyl-alpha-D-glucosamine = a UDP-3-O-[(3R)-3-hydroxyacyl]-N-acetyl-alpha-D-glucosamine + holo-[ACP]. The protein operates within glycolipid biosynthesis; lipid IV(A) biosynthesis; lipid IV(A) from (3R)-3-hydroxytetradecanoyl-[acyl-carrier-protein] and UDP-N-acetyl-alpha-D-glucosamine: step 1/6. Its function is as follows. Involved in the biosynthesis of lipid A, a phosphorylated glycolipid that anchors the lipopolysaccharide to the outer membrane of the cell. In Enterobacter sp. (strain 638), this protein is Acyl-[acyl-carrier-protein]--UDP-N-acetylglucosamine O-acyltransferase.